Here is a 232-residue protein sequence, read N- to C-terminus: Small ribosomal subunit protein uS3 (232 aa).

In terms of domain architecture, KH type-2 spans 39-107 (VRQFLTKELS…PAQINIAEVR (69 aa)).

The protein belongs to the universal ribosomal protein uS3 family. As to quaternary structure, part of the 30S ribosomal subunit. Forms a tight complex with proteins S10 and S14.

Functionally, binds the lower part of the 30S subunit head. Binds mRNA in the 70S ribosome, positioning it for translation. This Sodalis glossinidius (strain morsitans) protein is Small ribosomal subunit protein uS3.